The sequence spans 656 residues: Vacuolar amino acid transporter 3 (656 aa).

Residues 1-109 (MSNSQSIKIK…VPSTSEDPDV (109 aa)) are disordered. Residues 15-28 (NENFASGSYSSRRS) show a composition bias toward polar residues. 2 positions are modified to phosphoserine: serine 37 and serine 53. Positions 50–71 (ISPSESNLPNNVAENTTDTPVN) are enriched in polar residues. Residues 75 to 97 (IRDENHNSRKGKDVTLNSDEAHS) show a composition bias toward basic and acidic residues. Position 172 is a phosphoserine (serine 172). 11 helical membrane-spanning segments follow: residues 280-300 (AVLL…PKAF), 307-327 (FSSA…LLLI), 351-371 (FAIL…YISF), 389-409 (EYHL…LSLV), 419-439 (ALIA…WDVI), 457-477 (FSLF…ILPI), 494-514 (VMAA…AAFG), 537-557 (LYAI…IAII), 578-598 (YLRV…SSRL), 601-621 (FVSM…PPML), and 636-656 (DIFM…MTFF).

It belongs to the amino acid/polyamine transporter 2 family.

The protein localises to the endoplasmic reticulum membrane. It localises to the vacuole membrane. Functionally, involved in amino acid efflux from the vacuole to the cytoplasm. Capable of transporting large neutral amino acids including tyrosine, glutamine, asparagine, isoleucine and leucine. Required for spore formation. The chain is Vacuolar amino acid transporter 3 (avt3) from Schizosaccharomyces pombe (strain 972 / ATCC 24843) (Fission yeast).